The primary structure comprises 436 residues: 3-ketoacyl-CoA thiolase (436 aa).

The active-site Acyl-thioester intermediate is C99. Active-site proton acceptor residues include H392 and C422.

It belongs to the thiolase-like superfamily. Thiolase family. Heterotetramer of two alpha chains (FadJ) and two beta chains (FadI).

It is found in the cytoplasm. The catalysed reaction is an acyl-CoA + acetyl-CoA = a 3-oxoacyl-CoA + CoA. It participates in lipid metabolism; fatty acid beta-oxidation. Functionally, catalyzes the final step of fatty acid oxidation in which acetyl-CoA is released and the CoA ester of a fatty acid two carbons shorter is formed. The chain is 3-ketoacyl-CoA thiolase from Cronobacter sakazakii (strain ATCC BAA-894) (Enterobacter sakazakii).